We begin with the raw amino-acid sequence, 487 residues long: Phosphatidylserine synthase 2 (487 aa).

Basic and acidic residues predominate over residues 1-10 (MRRGERRDAG). The segment at 1 to 50 (MRRGERRDAGGPRPESPVPAGRASLEEPPDGPSAGQATGPGEGRRSTESE) is disordered. The Cytoplasmic portion of the chain corresponds to 1 to 62 (MRRGERRDAG…DDGTNTFFWR (62 aa)). Phosphoserine is present on residues S16 and S24. A helical transmembrane segment spans residues 63 to 83 (AHTLTVLFILTCTLGYVTLLE). Over 84–96 (ETPQDTAYNTKRG) the chain is Lumenal. Residues 97–117 (IVASILVFLCFGVTQAKDGPF) traverse the membrane as a helical segment. At 118–126 (SRPHPAYWR) the chain is on the cytoplasmic side. The helical transmembrane segment at 127 to 147 (FWLCVSVVYELFLIFILFQTV) threads the bilayer. Residues 148–313 (QDGRQFLKYV…EWKPASSLRR (166 aa)) lie on the Lumenal side of the membrane. An N-linked (GlcNAc...) asparagine glycan is attached at N181. A helical membrane pass occupies residues 314-334 (WLAVCGIILVFLLAELNTFYL). Residue K335 is a topological domain, cytoplasmic. A helical transmembrane segment spans residues 336–356 (FVLWMPPEHYLVLLRLVFFVN). The Lumenal portion of the chain corresponds to 357 to 376 (VGGVAMREIYDFMDDPKPHK). A helical transmembrane segment spans residues 377-397 (KLGPQAWLVAAITATELLIVV). Residues 398-403 (KYDPHT) lie on the Cytoplasmic side of the membrane. Residues 404–424 (LTLSLPFYISQCWTLGSVLAL) form a helical membrane-spanning segment. Topologically, residues 425 to 487 (TWTVWRFFLR…AEGEGAPTPN (63 aa)) are lumenal. The segment at 451–487 (KDDQGSTVGNGDQHPLGLDEDLLGPGVAEGEGAPTPN) is disordered. T485 bears the Phosphothreonine mark.

Belongs to the phosphatidyl serine synthase family.

It localises to the endoplasmic reticulum membrane. The catalysed reaction is a 1,2-diacyl-sn-glycero-3-phosphoethanolamine + L-serine = a 1,2-diacyl-sn-glycero-3-phospho-L-serine + ethanolamine. The enzyme catalyses 1-hexadecanoyl-2-(9Z-octadecenoyl)-sn-glycero-3-phosphoethanolamine + L-serine = 1-hexadecanoyl-2-(9Z-octadecenoyl)-sn-glycero-3-phospho-L-serine + ethanolamine. It catalyses the reaction 1-hexadecanoyl-2-(4Z,7Z,10Z,13Z,16Z,19Z-docosahexaenoyl)-sn-glycero-3-phosphoethanolamine + L-serine = 1-hexadecanoyl-2-(4Z,7Z,10Z,13Z,16Z,19Z-docosahexaenoyl)-sn-glycero-3-phosphoserine + ethanolamine. It carries out the reaction 1-octadecanoyl-2-(5Z,8Z,11Z,14Z)-eicosatetraenoyl-sn-glycero-3-phosphoethanolamine + L-serine = 1-octadecanoyl-2-(5Z,8Z,11Z,14Z)-eicosatetraenoyl-sn-glycero-3-phosphoserine + ethanolamine. The catalysed reaction is 1-octadecanoyl-2-(4Z,7Z,10Z,13Z,16Z,19Z-docosahexaenoyl)-sn-glycero-3-phosphoethanolamine + L-serine = 1-octadecanoyl-2-(4Z,7Z,10Z,13Z,16Z,19Z-docosahexaenoyl)-sn-glycero-3-phosphoserine + ethanolamine. The enzyme catalyses 1-(1Z-octadecenyl)-2-(4Z,7Z,10Z,13Z,16Z,19Z-docosahexaenoyl)-sn-glycero-3-phosphoethanolamine + L-serine = 1-(1Z-octadecenyl)-2-(4Z,7Z,10Z,13Z,16Z,19Z-docosahexaenoyl)-sn-glycero-3-phospho-L-serine + ethanolamine. It catalyses the reaction 1-octadecanoyl-2-(9Z-octadecenoyl)-sn-glycero-3-phosphoethanolamine + L-serine = 1-octadecanoyl-2-(9Z-octadecenoyl)-sn-glycero-3-phospho-L-serine + ethanolamine. It carries out the reaction 1-(1Z-octadecenyl)-2-(9Z-octadecenoyl)-sn-glycero-3-phosphoethanolamine + L-serine = 1-(1Z-octadecenyl)-2-(9Z-octadecenoyl)-sn-glycero-3-phospho-L-serine + ethanolamine. The catalysed reaction is 1-(1Z-octadecenyl)-2-(5Z,8Z,11Z,14Z- eicosatetraenoyl)-sn-glycero-3-phosphoethanolamine + L-serine = 1-(1Z-octadecenyl)-2-(5Z,8Z,11Z,14Z-eicosatetraenoyl)-sn-glycero-3-phospho-L-serine + ethanolamine. The protein operates within phospholipid metabolism; phosphatidylserine biosynthesis. Its activity is regulated as follows. Requires calcium ions. Inhibited by exogenous phosphatidylserine. Functionally, catalyzes a base-exchange reaction in which the polar head group of phosphatidylethanolamine (PE) or phosphatidylcholine (PC) is replaced by L-serine. Catalyzes the conversion of phosphatatidylethanolamine and does not act on phosphatidylcholine. Can utilize both phosphatidylethanolamine (PE) plasmalogen and diacyl PE as substrate and the latter is six times better utilized, indicating the importance of an ester linkage at the sn-1 position. Although it shows no sn-1 fatty acyl preference, exhibits significant preference towards docosahexaenoic acid (22:6n-3) compared with 18:1 or 20:4 at the sn-2 position. This chain is Phosphatidylserine synthase 2 (PTDSS2), found in Homo sapiens (Human).